The following is a 316-amino-acid chain: C1GALT1-specific chaperone 1 (316 aa).

At 1–6 (MLSESS) the chain is on the cytoplasmic side. A helical; Signal-anchor for type II membrane protein membrane pass occupies residues 7-26 (SFLKGVMLGSIFCALITMLG). At 27 to 316 (HIRIGNRMHH…FLPPNGSEND (290 aa)) the chain is on the lumenal side.

It belongs to the glycosyltransferase 31 family. Beta3-Gal-T subfamily. Associates with core 1 beta-3-galactosyltransferase (C1GALT1), probably not with the soluble active form.

Its subcellular location is the membrane. Functionally, probable chaperone required for the generation of 1 O-glycan Gal-beta1-3GalNAc-alpha1-Ser/Thr (T antigen), which is a precursor for many extended O-glycans in glycoproteins. Probably acts as a specific molecular chaperone assisting the folding/stability of core 1 beta-3-galactosyltransferase (C1GALT1). In Mus musculus (Mouse), this protein is C1GALT1-specific chaperone 1 (C1galt1c1).